The sequence spans 344 residues: uncharacterized protein (344 aa).

Lys-38 and Tyr-167 together coordinate NADP(+).

Belongs to the NAD(P)-dependent epimerase/dehydratase family. Dihydroflavonol-4-reductase subfamily.

This is an uncharacterized protein from Saccharomyces cerevisiae (strain ATCC 204508 / S288c) (Baker's yeast).